Reading from the N-terminus, the 237-residue chain is 2-C-methyl-D-erythritol 4-phosphate cytidylyltransferase (237 aa).

It belongs to the IspD/TarI cytidylyltransferase family. IspD subfamily.

The enzyme catalyses 2-C-methyl-D-erythritol 4-phosphate + CTP + H(+) = 4-CDP-2-C-methyl-D-erythritol + diphosphate. The protein operates within isoprenoid biosynthesis; isopentenyl diphosphate biosynthesis via DXP pathway; isopentenyl diphosphate from 1-deoxy-D-xylulose 5-phosphate: step 2/6. Its function is as follows. Catalyzes the formation of 4-diphosphocytidyl-2-C-methyl-D-erythritol from CTP and 2-C-methyl-D-erythritol 4-phosphate (MEP). This Paraburkholderia xenovorans (strain LB400) protein is 2-C-methyl-D-erythritol 4-phosphate cytidylyltransferase.